Here is a 459-residue protein sequence, read N- to C-terminus: Endoglucanase CelA (459 aa).

The N-terminal stretch at M1 to A27 is a signal peptide. Residues A28 to S134 form the CBM2 domain. C31 and C131 are disulfide-bonded. The disordered stretch occupies residues A129–T151. The interval T136–P147 is linker ('hinge') (Pro-Thr box). The segment at A148–H357 is catalytic. The active-site Proton donor is E286. The active-site Nucleophile is E378.

Belongs to the glycosyl hydrolase 5 (cellulase A) family. The linker region (also termed 'hinge') may be a potential site for proteolysis.

The catalysed reaction is Endohydrolysis of (1-&gt;4)-beta-D-glucosidic linkages in cellulose, lichenin and cereal beta-D-glucans.. The polypeptide is Endoglucanase CelA (celA) (Streptomyces lividans).